A 332-amino-acid polypeptide reads, in one-letter code: NADH-quinone oxidoreductase subunit H (332 aa).

Helical transmembrane passes span 11 to 31 (TYKILFLLVPVLVSVAMIVWL), 77 to 97 (VIFILAPIVTMTLALVSWAVI), 110 to 130 (VGVLYLFAVSSLGVYGIIMGG), 156 to 176 (IGVIIINVLLCVGSLNLNDII), 182 to 202 (LWFIIPLFPMFVIFFISALAE), 240 to 260 (NILLMCAMGSILFLGGWLSPI), 268 to 288 (IPGAIWMIFKILFLFVLFALV), and 307 to 327 (IFLPLSLTWVVLTASYLFYFN).

It belongs to the complex I subunit 1 family. In terms of assembly, NDH-1 is composed of 14 different subunits. Subunits NuoA, H, J, K, L, M, N constitute the membrane sector of the complex.

It localises to the cell inner membrane. It carries out the reaction a quinone + NADH + 5 H(+)(in) = a quinol + NAD(+) + 4 H(+)(out). Its function is as follows. NDH-1 shuttles electrons from NADH, via FMN and iron-sulfur (Fe-S) centers, to quinones in the respiratory chain. The immediate electron acceptor for the enzyme in this species is believed to be ubiquinone. Couples the redox reaction to proton translocation (for every two electrons transferred, four hydrogen ions are translocated across the cytoplasmic membrane), and thus conserves the redox energy in a proton gradient. This subunit may bind ubiquinone. The polypeptide is NADH-quinone oxidoreductase subunit H (Pelagibacter ubique (strain HTCC1062)).